We begin with the raw amino-acid sequence, 585 residues long: Potassium-transporting ATPase potassium-binding subunit (585 aa).

12 helical membrane-spanning segments follow: residues 25–45, 84–104, 152–172, 194–214, 275–295, 307–327, 345–365, 368–388, 397–417, 437–457, 502–522, and 547–567; these read IIIF…SFYI, YFIN…LVIM, FVIT…SMAF, IFDL…LAGV, LEFV…GIVF, VIMF…YVGV, AIGV…STGA, GALV…LLLN, GVLN…LMVG, LSLV…LMIP, LDGV…LVIA, and LLLI…IIVL.

This sequence belongs to the KdpA family. As to quaternary structure, the system is composed of three essential subunits: KdpA, KdpB and KdpC.

It localises to the cell membrane. Part of the high-affinity ATP-driven potassium transport (or Kdp) system, which catalyzes the hydrolysis of ATP coupled with the electrogenic transport of potassium into the cytoplasm. This subunit binds the extracellular potassium ions and delivers the ions to the membrane domain of KdpB through an intramembrane tunnel. In Thermoplasma volcanium (strain ATCC 51530 / DSM 4299 / JCM 9571 / NBRC 15438 / GSS1), this protein is Potassium-transporting ATPase potassium-binding subunit.